The primary structure comprises 75 residues: MNSKHSSDFVVIKAVEDGVNVIGLTRGTDTKFHHSEKLDKGEVIIAQFTEHTSAIKVRGNALIQTAYGEMNSEKK.

It belongs to the MtrB family. In terms of assembly, oligomer of 11 identical subunits arranged in doughnut-like structure.

Functionally, required for transcription attenuation control in the Trp operon. This trans-acting factor seems to recognize a 10 bases nucleotide sequence in the Trp leader transcript causing transcription termination. Binds the leader RNA only in presence of L-tryptophan. The sequence is that of Transcription attenuation protein MtrB from Bacillus velezensis (strain DSM 23117 / BGSC 10A6 / LMG 26770 / FZB42) (Bacillus amyloliquefaciens subsp. plantarum).